The sequence spans 142 residues: HTH-type transcriptional regulator LysM (142 aa).

An HTH asnC-type domain is found at 6-69; it reads IDESDLKILE…ELENEIRAIV (64 aa). Residues 25 to 44 constitute a DNA-binding region (H-T-H motif); it reads YTLIAKELKVSEAAIRKRIE.

As to quaternary structure, homotetramer.

The protein resides in the cytoplasm. Its pathway is amino-acid biosynthesis; L-lysine biosynthesis via AAA pathway [regulation]. In the absence or at low concentrations of lysine, activates the biosynthesis of this amino acid via the alpha-aminoadipate (AAA) pathway. This Saccharolobus solfataricus (strain ATCC 35092 / DSM 1617 / JCM 11322 / P2) (Sulfolobus solfataricus) protein is HTH-type transcriptional regulator LysM (lysM).